Reading from the N-terminus, the 296-residue chain is Coatomer subunit epsilon (296 aa).

It belongs to the COPE family. Oligomeric complex that consists of at least the alpha, beta, beta', gamma, delta, epsilon and zeta subunits. Interacts with the ESCRT-0 subunit VPS27.

It is found in the cytoplasm. Its subcellular location is the golgi apparatus membrane. It localises to the cytoplasmic vesicle. The protein localises to the COPI-coated vesicle membrane. In terms of biological role, the coatomer is a cytosolic protein complex that binds to dilysine motifs and reversibly associates with Golgi non-clathrin-coated vesicles, which further mediate biosynthetic protein transport from the ER, via the Golgi up to the trans Golgi network. The coatomer complex is required for budding from Golgi membranes, and is essential for the retrograde Golgi-to-ER transport of dilysine-tagged proteins. In Saccharomyces cerevisiae (strain ATCC 204508 / S288c) (Baker's yeast), this protein is Coatomer subunit epsilon (SEC28).